The sequence spans 216 residues: Ras-related protein Rab11C (216 aa).

19 to 26 (GDSGVGKS) is a GTP binding site. Positions 41-49 (SKSTIGVEF) match the Effector region motif. GTP is bound by residues 67–71 (DTAGQ) and 125–128 (NKSD). S-geranylgeranyl cysteine attachment occurs at residues Cys-213 and Cys-214.

This sequence belongs to the small GTPase superfamily. Rab family.

The protein localises to the cell membrane. The sequence is that of Ras-related protein Rab11C (RAB11C) from Lotus japonicus (Lotus corniculatus var. japonicus).